We begin with the raw amino-acid sequence, 291 residues long: Ribose-phosphate pyrophosphokinase (291 aa).

ATP contacts are provided by residues Asp-34–Glu-36 and Arg-93–Gln-94. Mg(2+) is bound by residues His-127 and Asp-165. Residue Lys-188 is part of the active site. D-ribose 5-phosphate is bound by residues Arg-190, Asp-216, and Ser-220 to Thr-224.

Belongs to the ribose-phosphate pyrophosphokinase family. Class III (archaeal) subfamily. Mg(2+) is required as a cofactor.

The protein resides in the cytoplasm. It carries out the reaction D-ribose 5-phosphate + ATP = 5-phospho-alpha-D-ribose 1-diphosphate + AMP + H(+). Its pathway is metabolic intermediate biosynthesis; 5-phospho-alpha-D-ribose 1-diphosphate biosynthesis; 5-phospho-alpha-D-ribose 1-diphosphate from D-ribose 5-phosphate (route I): step 1/1. Functionally, involved in the biosynthesis of the central metabolite phospho-alpha-D-ribosyl-1-pyrophosphate (PRPP) via the transfer of pyrophosphoryl group from ATP to 1-hydroxyl of ribose-5-phosphate (Rib-5-P). The polypeptide is Ribose-phosphate pyrophosphokinase (Sulfolobus acidocaldarius (strain ATCC 33909 / DSM 639 / JCM 8929 / NBRC 15157 / NCIMB 11770)).